The primary structure comprises 135 residues: L-alanine exporter AlaE (135 aa).

3 helical membrane-spanning segments follow: residues 9–29 (VATVIFFTAVATFSELLIAGM), 75–95 (DILAFLSFQAPVYGATLLIAG), and 96–116 (ASFAEAGTAIGSAIILMILLA).

The protein belongs to the AlaE exporter family.

It localises to the cell inner membrane. Functionally, exports L-alanine. This chain is L-alanine exporter AlaE, found in Cereibacter sphaeroides (strain ATCC 17023 / DSM 158 / JCM 6121 / CCUG 31486 / LMG 2827 / NBRC 12203 / NCIMB 8253 / ATH 2.4.1.) (Rhodobacter sphaeroides).